Consider the following 400-residue polypeptide: Argininosuccinate synthase (400 aa).

8 to 16 (AYSGGLDTS) contacts ATP. Residue tyrosine 87 coordinates L-citrulline. Glycine 117 is a binding site for ATP. The L-aspartate site is built by threonine 119, asparagine 123, and aspartate 124. Asparagine 123 lines the L-citrulline pocket. Arginine 127, serine 175, glutamate 260, and tyrosine 272 together coordinate L-citrulline.

Belongs to the argininosuccinate synthase family. Type 1 subfamily. In terms of assembly, homotetramer.

The protein localises to the cytoplasm. The catalysed reaction is L-citrulline + L-aspartate + ATP = 2-(N(omega)-L-arginino)succinate + AMP + diphosphate + H(+). Its pathway is amino-acid biosynthesis; L-arginine biosynthesis; L-arginine from L-ornithine and carbamoyl phosphate: step 2/3. This is Argininosuccinate synthase from Nocardia farcinica (strain IFM 10152).